Here is a 398-residue protein sequence, read N- to C-terminus: MLSPNLTIVKNLPLKKRICFLLKLVCFVSSVLIFCEFFIYYLVIFQCRWPDVKRDAHTGNEETPASVLKAMFLADTHLLGEIKGHWLDKLRREWQMERSFQTALWLLQPDIVFILGDVFDEGKWDSPQAWADDVRRFQKMFKYPVTTELVVIVGNHDIGFHYEMTTYKVHRFEKVFNFTSGKLITRKGTNFVLVNSVAMEGDGCTLCRTAEAKLVALSHRLNCSLQEPNHPQKRCSDAEKPPASQPILLQHYPLYRKSDAECSGEDAAPPEEKNIPFKEKYDVLSQEASQKLLWWFRPRLILSGHTHSACQVLHTGGIPEISIPSFSWRNRNNPSFIMGSITPTDFSLHKCFLPRESRVFAIYWAAGALLVVLVLAHFQLLTPPFYFAQRLISKHKAA.

Residues 25 to 45 form a helical membrane-spanning segment; that stretch reads VCFVSSVLIFCEFFIYYLVIF. Positions 75, 117, 155, 251, 305, and 307 each coordinate a divalent metal cation. Residues 359-379 traverse the membrane as a helical segment; the sequence is VFAIYWAAGALLVVLVLAHFQ. The Di-lysine motif motif lies at 394-398; that stretch reads KHKAA.

It belongs to the metallophosphoesterase superfamily. MPPE1 family. Mn(2+) is required as a cofactor.

The protein resides in the endoplasmic reticulum-Golgi intermediate compartment membrane. In terms of biological role, metallophosphoesterase that catalyzes the removal of a side-chain ethanolamine-phosphate (EtNP) from the second mannose of the GPI-anchor protein intermediate. Participates in the glycan remodeling steps of GPI-anchor maturation to allow an efficient transport of GPI-anchor proteins from the endoplasmic reticulum to the Golgi. The chain is Metallophosphoesterase 1 from Gallus gallus (Chicken).